We begin with the raw amino-acid sequence, 310 residues long: tRNA-cytidine(32) 2-sulfurtransferase (310 aa).

Residues 44-49 carry the PP-loop motif motif; sequence SGGKDS. 3 residues coordinate [4Fe-4S] cluster: Cys119, Cys122, and Cys210.

Belongs to the TtcA family. Homodimer. Mg(2+) is required as a cofactor. It depends on [4Fe-4S] cluster as a cofactor.

It localises to the cytoplasm. The enzyme catalyses cytidine(32) in tRNA + S-sulfanyl-L-cysteinyl-[cysteine desulfurase] + AH2 + ATP = 2-thiocytidine(32) in tRNA + L-cysteinyl-[cysteine desulfurase] + A + AMP + diphosphate + H(+). Its pathway is tRNA modification. In terms of biological role, catalyzes the ATP-dependent 2-thiolation of cytidine in position 32 of tRNA, to form 2-thiocytidine (s(2)C32). The sulfur atoms are provided by the cysteine/cysteine desulfurase (IscS) system. This chain is tRNA-cytidine(32) 2-sulfurtransferase, found in Saccharophagus degradans (strain 2-40 / ATCC 43961 / DSM 17024).